The chain runs to 145 residues: MSEFVKPFNNDPFVGNLSTPVTTSTATKLYLGNLPIYRKGLTPLLRGLEIGMAHGYFLIGPFYILGPLRNSPNALLVGLFSAFGLIIILTLALTIYGLASFQDNGVGENLESSKGWRNFTSGFTIGALGGASVAYLVLNNISFFA.

A run of 3 helical transmembrane segments spans residues 48–68 (LEIGMAHGYFLIGPFYILGPL), 75–95 (LLVGLFSAFGLIIILTLALTI), and 125–145 (IGALGGASVAYLVLNNISFFA).

It belongs to the PsaL family.

The protein localises to the plastid. It is found in the chloroplast thylakoid membrane. The sequence is that of Photosystem I reaction center subunit XI from Isochrysis galbana (Marine planktonic alga).